The following is a 375-amino-acid chain: Ornithine transcarbamylase, chloroplastic (375 aa).

The N-terminal 53 residues, 1–53 (MAAAMASHVSTARSPALSFSSSSSSFFPGTTLRRFSAVSLPSPALPRLRVSCQ), are a transit peptide targeting the chloroplast. Alanine 54 is subject to N-acetylalanine. Residues 123-126 (SMRT), arginine 174, histidine 201, and glutamine 204 each bind carbamoyl phosphate. Positions 232, 293, 297, and 298 each coordinate L-ornithine. Residue cysteine 333 is the Proton acceptor of the active site. Carbamoyl phosphate contacts are provided by residues 333-334 (CL) and arginine 361.

Belongs to the aspartate/ornithine carbamoyltransferase superfamily. OTCase family.

It localises to the plastid. It is found in the chloroplast. The enzyme catalyses carbamoyl phosphate + L-ornithine = L-citrulline + phosphate + H(+). The polypeptide is Ornithine transcarbamylase, chloroplastic (OTC) (Arabidopsis thaliana (Mouse-ear cress)).